We begin with the raw amino-acid sequence, 237 residues long: NAD-dependent protein deacylase (237 aa).

The 235-residue stretch at 1–235 (MRVVVLSGAG…PGLLQRLPAL (235 aa)) folds into the Deacetylase sirtuin-type domain. An NAD(+)-binding site is contributed by 8–28 (GAGISAESDVPTFRDDKNGLW). Substrate-binding residues include Tyr-53 and Arg-56. An NAD(+)-binding site is contributed by 86-89 (QNVD). His-104 (proton acceptor) is an active-site residue. Residues Cys-112, Cys-115, Cys-138, and Cys-140 each coordinate Zn(2+). NAD(+)-binding positions include 177 to 179 (GTS), 203 to 205 (NPE), and Ala-221.

The protein belongs to the sirtuin family. Class III subfamily. Zn(2+) serves as cofactor.

Its subcellular location is the cytoplasm. The enzyme catalyses N(6)-acetyl-L-lysyl-[protein] + NAD(+) + H2O = 2''-O-acetyl-ADP-D-ribose + nicotinamide + L-lysyl-[protein]. The catalysed reaction is N(6)-succinyl-L-lysyl-[protein] + NAD(+) + H2O = 2''-O-succinyl-ADP-D-ribose + nicotinamide + L-lysyl-[protein]. NAD-dependent lysine deacetylase and desuccinylase that specifically removes acetyl and succinyl groups on target proteins. Modulates the activities of several proteins which are inactive in their acylated form. This Mycobacterium leprae (strain TN) protein is NAD-dependent protein deacylase.